Consider the following 206-residue polypeptide: Holliday junction branch migration complex subunit RuvA (206 aa).

The tract at residues 1–64 (MIGRLSGTIL…EDAQLLYGFN (64 aa)) is domain I. Residues 65 to 143 (KKSERELFRE…GWGEGDLFTP (79 aa)) form a domain II region. Residues 144–157 (ASDAAASNAEIQKY) are flexible linker. Residues 158 to 206 (SSARAEDEAVSALIALGYKALQAAKVVSQVVKPEMSSENIIREALRSMV) form a domain III region.

It belongs to the RuvA family. In terms of assembly, homotetramer. Forms an RuvA(8)-RuvB(12)-Holliday junction (HJ) complex. HJ DNA is sandwiched between 2 RuvA tetramers; dsDNA enters through RuvA and exits via RuvB. An RuvB hexamer assembles on each DNA strand where it exits the tetramer. Each RuvB hexamer is contacted by two RuvA subunits (via domain III) on 2 adjacent RuvB subunits; this complex drives branch migration. In the full resolvosome a probable DNA-RuvA(4)-RuvB(12)-RuvC(2) complex forms which resolves the HJ.

The protein resides in the cytoplasm. Functionally, the RuvA-RuvB-RuvC complex processes Holliday junction (HJ) DNA during genetic recombination and DNA repair, while the RuvA-RuvB complex plays an important role in the rescue of blocked DNA replication forks via replication fork reversal (RFR). RuvA specifically binds to HJ cruciform DNA, conferring on it an open structure. The RuvB hexamer acts as an ATP-dependent pump, pulling dsDNA into and through the RuvAB complex. HJ branch migration allows RuvC to scan DNA until it finds its consensus sequence, where it cleaves and resolves the cruciform DNA. The polypeptide is Holliday junction branch migration complex subunit RuvA (Photobacterium profundum (strain SS9)).